Reading from the N-terminus, the 806-residue chain is MDFVSIEKKWQEFWHQNESFEPKDDFNLPKKYILSMLPYPSGEIHMGHVRNYTIGDALVRYYRLHHYNVLHPMGFDSFGMPAENAAIKHGIHPKTWTYENIENMQKEFEALGFSFSKNREFATSDPNYTEFEQQFFIDLWEKGLIYRKKAMLNWCPNDKTVLANEQVIEGRCWRCDTEVVQKELYQYYLKITNYAEELLKDLETLKNHWPSQVLLMQKNWIGKSSGLQFRFKIADECLKACNDIQEIEVFTTRADTIYGVTYIAIAPEHPLVEHAIKQVNQEDLKTIKAILNTTPRERTLEKKGAFLGIYAIHPLTKQKIPIWVANFALANYGSGALMGVPACDERDFEFANLYHIPIKVITQSPQNLPHTKEETLKNSGEWSDLPSSVAREKIIAYFEKENLGKRVINYRLQDWGVSRQRYWGAPIPMIHCKNCGIVPETQLPVTLPEDIVIDGEGNPLEKHASWKFTQCPKCHKDALRETDTMDTFIQSSWYFLRYTTPKNQRENQAFDKNYLKYFMPVDTYIGGIEHAILHLLYARFFTKALRDLGYIDLDEPFKQLITQGMVLKDGVKMSKSKGNVVSPKEILKKYGADAARLFILFAAPPAKELEWNDSALEGAHRFIKRLYDKANAINPTTYKPEFKEANLNEAEKLARKKVYEALKKSHEIFNNPESTYAFNTLIASCMEALNALNTQNNERILCEGYFVLLQVLEPMIPHTAWELSERLFKRANFKPITIDESALIEDSMTLALTINGKRRAELKVHINASKEEILALAKKELEKYLENASVKKEIYVPNKLVNFVIA.

The 'HIGH' region motif lies at 38-48; the sequence is PYPSGEIHMGH. Residues 572 to 576 carry the 'KMSKS' region motif; the sequence is KMSKS. Residue Lys-575 coordinates ATP.

It belongs to the class-I aminoacyl-tRNA synthetase family.

The protein localises to the cytoplasm. The catalysed reaction is tRNA(Leu) + L-leucine + ATP = L-leucyl-tRNA(Leu) + AMP + diphosphate. The sequence is that of Leucine--tRNA ligase from Helicobacter acinonychis (strain Sheeba).